Consider the following 430-residue polypeptide: RNA polymerase-associated protein LEO1 (430 aa).

The span at 1-10 shows a compositional bias: polar residues; that stretch reads MSSSEGNSDA. The disordered stretch occupies residues 1-128; it reads MSSSEGNSDA…SRGSLNDLQG (128 aa). The segment covering 18-30 has biased composition (low complexity); it reads KSSTPSSRGSSPD. Residues 99-119 show a composition bias toward basic and acidic residues; it reads REGKPKESNTRARLSDSDAES. 2 coiled-coil regions span residues 326-347 and 409-429; these read TRRENARKEEESLRAHIRRTQM and EEYRKRKQQQKKQIVTSDEES. Residues 349-430 are disordered; sequence RNNFKVRGPR…QIVTSDEESD (82 aa).

The protein belongs to the LEO1 family. Component of the PAF1 complex which consists of at least cdc-73, ctr-9, leo-1, pafo-1 and rtfo-1.

It is found in the nucleus. The protein resides in the cytoplasm. Component of the PAF1 complex which is a multifunctional complex involved in transcription initiation via genetic interactions with TATA-binding proteins, elongation and transcription-coupled histone modification. The sequence is that of RNA polymerase-associated protein LEO1 from Caenorhabditis elegans.